We begin with the raw amino-acid sequence, 291 residues long: tRNA N(3)-cytidine methyltransferase METTL8, mitochondrial (291 aa).

The transit peptide at 1–21 (MNMIWRNSISCLRLGKVPHRY) directs the protein to the mitochondrion. Lysine 80 participates in a covalent cross-link: Glycyl lysine isopeptide (Lys-Gly) (interchain with G-Cter in SUMO). Positions 89 and 93 each coordinate S-adenosyl-L-methionine. Residues 141–187 (FSRMHCPTVPDEKNHYEKSSGSSEGQSKTESDFSNLDSEKHKKGPME) are disordered. Low complexity predominate over residues 159-168 (SSGSSEGQSK). 3 residues coordinate S-adenosyl-L-methionine: glycine 204, aspartate 230, and aspartate 256.

It belongs to the methyltransferase superfamily. METL family. As to quaternary structure, interacts with EP300.

It localises to the mitochondrion. It carries out the reaction cytidine(32) in tRNA(Ser) + S-adenosyl-L-methionine = N(3)-methylcytidine(32) in tRNA(Ser) + S-adenosyl-L-homocysteine + H(+). The catalysed reaction is cytidine(32) in tRNA(Thr) + S-adenosyl-L-methionine = N(3)-methylcytidine(32) in tRNA(Thr) + S-adenosyl-L-homocysteine + H(+). It catalyses the reaction a cytidine in mRNA + S-adenosyl-L-methionine = an N(3)-methylcytidine in mRNA + S-adenosyl-L-homocysteine + H(+). Its function is as follows. Mitochondrial S-adenosyl-L-methionine-dependent methyltransferase that mediates N(3)-methylcytidine modification of residue 32 of the tRNA anticodon loop of mitochondrial tRNA(Ser)(UCN) and tRNA(Thr). N(3)-methylcytidine methylation modification regulates mitochondrial translation efficiency and is required for activity of the respiratory chain. N(3)-methylcytidine methylation of mitochondrial tRNA(Ser)(UCN) requires the formation of N(6)-dimethylallyladenosine(37) (i6A37) by TRIT1 as prerequisite. May also mediate N(3)-methylcytidine modification of mRNAs. The existence of N(3)-methylcytidine modification on mRNAs is however unclear, and additional evidences are required to confirm the role of the N(3)-methylcytidine-specific mRNA methyltransferase activity of METTL8 in vivo. The polypeptide is tRNA N(3)-cytidine methyltransferase METTL8, mitochondrial (Homo sapiens (Human)).